Reading from the N-terminus, the 607-residue chain is Dolichyl-diphosphooligosaccharide--protein glycosyltransferase subunit 1 (607 aa).

The signal sequence occupies residues 1–23; it reads MEAPAARLFLLLLLGTWAPAPGS. Topologically, residues 24-434 are lumenal; the sequence is ASSEAPPLIN…VVHYTFNKVL (411 aa). Lys-187 carries the N6-acetyllysine modification. An N-linked (GlcNAc...) asparagine glycan is attached at Asn-299. A helical membrane pass occupies residues 435–455; it reads MLQEPLLVVAAFYILFFTVII. Topologically, residues 456–607 are cytoplasmic; sequence YVRLDFSITK…TKIDHILDAL (152 aa). Lys-538 is modified (N6-acetyllysine; alternate). Residue Lys-538 forms a Glycyl lysine isopeptide (Lys-Gly) (interchain with G-Cter in SUMO2); alternate linkage.

This sequence belongs to the OST1 family. Component of the oligosaccharyltransferase (OST) complex. OST exists in two different complex forms which contain common core subunits RPN1, RPN2, OST48, OST4, DAD1 and TMEM258, either STT3A or STT3B as catalytic subunits, and form-specific accessory subunits. STT3A complex assembly occurs through the formation of 3 subcomplexes. Subcomplex 1 contains RPN1 and TMEM258, subcomplex 2 contains the STT3A-specific subunits STT3A, DC2/OSTC, and KCP2 as well as the core subunit OST4, and subcomplex 3 contains RPN2, DAD1, and OST48. The STT3A complex can form stable complexes with the Sec61 complex or with both the Sec61 and TRAP complexes. Interacts with TMEM35A/NACHO. In terms of processing, ubiquitinated by the ECS(ASB11) complex. Ufmylated by UFL1 in response to endoplasmic reticulum stress, promoting reticulophagy of endoplasmic reticulum sheets.

The protein localises to the endoplasmic reticulum membrane. It functions in the pathway protein modification; protein glycosylation. Functionally, subunit of the oligosaccharyl transferase (OST) complex that catalyzes the initial transfer of a defined glycan (Glc(3)Man(9)GlcNAc(2) in eukaryotes) from the lipid carrier dolichol-pyrophosphate to an asparagine residue within an Asn-X-Ser/Thr consensus motif in nascent polypeptide chains, the first step in protein N-glycosylation. N-glycosylation occurs cotranslationally and the complex associates with the Sec61 complex at the channel-forming translocon complex that mediates protein translocation across the endoplasmic reticulum (ER). All subunits are required for a maximal enzyme activity. The sequence is that of Dolichyl-diphosphooligosaccharide--protein glycosyltransferase subunit 1 from Pongo abelii (Sumatran orangutan).